The chain runs to 1482 residues: Pregnancy zone protein (1482 aa).

A signal peptide spans 1–25 (MRKDRLLHLCLVLLLILLSASDSNS). N-linked (GlcNAc...) asparagine glycosylation is found at asparagine 54, asparagine 69, asparagine 246, asparagine 392, and asparagine 406. Residues 685 to 735 (CSVIPSVSAGAVGQGYYGAGLGVVERPYVPQLGTYNVIPLNNEQSSGPVPE) are bait region. N-linked (GlcNAc...) asparagine glycans are attached at residues asparagine 753, asparagine 875, and asparagine 932. Positions 978 to 981 (CGEQ) form a cross-link, isoglutamyl cysteine thioester (Cys-Gln). N-linked (GlcNAc...) asparagine glycans are attached at residues asparagine 997 and asparagine 1430.

The protein belongs to the protease inhibitor I39 (alpha-2-macroglobulin) family. Homotetramer, which consists of two pairs of disulfide-linked chains. As to expression, plasma. Prominent constituent of late-pregnancy sera.

The protein localises to the secreted. Functionally, is able to inhibit all four classes of proteinases by a unique 'trapping' mechanism. This protein has a peptide stretch, called the 'bait region' which contains specific cleavage sites for different proteinases. When a proteinase cleaves the bait region, a conformational change is induced in the protein which traps the proteinase. The entrapped enzyme remains active against low molecular weight substrates (activity against high molecular weight substrates is greatly reduced). Following cleavage in the bait region a thioester bond is hydrolyzed and mediates the covalent binding of the protein to the proteinase. The protein is Pregnancy zone protein (PZP) of Homo sapiens (Human).